The chain runs to 652 residues: DNA ligase (652 aa).

NAD(+) is bound by residues aspartate 29–aspartate 33, serine 78–leucine 79, and glutamate 107. Catalysis depends on lysine 109, which acts as the N6-AMP-lysine intermediate. 4 residues coordinate NAD(+): arginine 130, glutamate 164, lysine 278, and lysine 302. Cysteine 395, cysteine 398, cysteine 413, and cysteine 418 together coordinate Zn(2+). Positions valine 577–leucine 652 constitute a BRCT domain.

The protein belongs to the NAD-dependent DNA ligase family. LigA subfamily. Mg(2+) is required as a cofactor. The cofactor is Mn(2+).

It carries out the reaction NAD(+) + (deoxyribonucleotide)n-3'-hydroxyl + 5'-phospho-(deoxyribonucleotide)m = (deoxyribonucleotide)n+m + AMP + beta-nicotinamide D-nucleotide.. In terms of biological role, DNA ligase that catalyzes the formation of phosphodiester linkages between 5'-phosphoryl and 3'-hydroxyl groups in double-stranded DNA using NAD as a coenzyme and as the energy source for the reaction. It is essential for DNA replication and repair of damaged DNA. The protein is DNA ligase of Streptococcus pneumoniae (strain P1031).